We begin with the raw amino-acid sequence, 1306 residues long: MDSVEEPQKKVFKARKTMRASDRQQLDAVHRVKGELLRADGKLLNGSHENGDLDPTSPLENTDCIQDREEVNGIDGICFQSEESTTEWKETPCMPNVAVKNKQEDLNSEALSPSITCDLSSRVTTEPGSGSPASDNPGCGTPVSDNPASDNPASDNPASDNPDSGDLAAGELATTVQATGDSACEEPPSSDPSSSDPTSSEPSSSEPTCSEPISGDPVSEEAASHDLVSGDSTCSEPVSGEPVSHEAASSEPATSEPASDEPVARVVAACELAPGESALDDCAPSGDSQSDEPPSSEDSLPRSVCSGLASGELTPGELSVEPATDTVKPSSSAVCEAGPDPDKTEPSSNNSDDCPGKSEDDEHLDQIQSKDSCDEGNKVNSNVVEKEEPLETHSAIICSDLPPENTTKIAEDPIAEPALEEEAISSSMEVDQSEKDEHKSPAEPVAAVSEDPAEEDKEDTVVDNTDSMETDEIIPILEKLAPTEDELSCFSKASLLPVETSQDLEDKMEGSFGSPSKQESSENLPKEAFLVLSDEEDLSCGKDESEAVAQSKMSTPEGEKSEKDGKAEEEERVPAEEQPPVRNEFSRRKRSKSEDMDSVESKRRRYMDEEYEAEFQVKITAKGDINQKLQKVIQWLLQEKLCALQCAVFDKTLAELKTRVEKIECNKRHKAVLTELQAKIARLTKRFGAAKDDLKKRQESPPNPPISPGKPANDTNSNNNMTYRNAGTVRQLLESKRNVSEGPPPSFQTPVNTVSSASHATSTAVVSSQPKLQTSATSGSLPAAPLLPAPSTATVVATTQVPSGTPQPTISLQPLPVILHVPVAVTSQPQLLQSHPGTLVTNQPSGNVEFISVQSQPTVSGLTKNPVSLPPLPNPTKPNIPSVPSPSSIQRNSSTTAAPLGTTLAVQAVPTAHSIVQATRTSLPTVGPSGLYSSSSSRGPIQMKIPISTFSPPSSAEQNSSATPRIVTENQTNKTVDSSINKKAADSTSQSGKASSSDSSGVIDLTMDDEESGTTQDPKKISPPSSSTVSTSQPMSRPLQPILPAPPLQPSGVPTSGPSQATIHVLPTAPTTVNVTHRPVTQVTTRLPVPRAPANHQVVYTTLPAPTTQAPLRGTVMQAPAVRQVNPQNSVTVRVPQTTTYVVNNGLTLGSAGPQLTVHHRPPQVHNEPPRPLHPAPLPEAPQPQRLPPEAASTSLPQKPHLKLARVQSQNGIVLSWSVLEVDRSCATVDSYHLYAYHEEPSATVPSQWKKIGEVKALPLPMACTLTQFVSGSKYYFAVRAKDIYGRFGPFCDPQSTDVISSSQNS.

An N-acetylmethionine modification is found at M1. Positions 1-23 (MDSVEEPQKKVFKARKTMRASDR) are disordered. Residue K33 forms a Glycyl lysine isopeptide (Lys-Gly) (interchain with G-Cter in SUMO2) linkage. 2 positions are modified to phosphoserine: S57 and S112. 7 disordered regions span residues 104–470 (EDLN…SMET), 496–604 (LPVE…SKRR), 689–722 (AAKD…NNMT), 765–785 (VVSS…PAAP), 871–895 (PLPN…NSST), 920–1060 (RTSL…GPSQ), and 1152–1196 (AGPQ…STSL). 2 stretches are compositionally biased toward polar residues: residues 109–134 (EALS…SPAS) and 143–162 (VSDN…SDNP). T124 is modified (phosphothreonine). Low complexity-rich tracts occupy residues 185–212 (EEPP…CSEP), 246–261 (EAAS…ASDE), and 284–303 (PSGD…LPRS). Basic and acidic residues predominate over residues 432–441 (QSEKDEHKSP). Residues S511, S514, S516, and S533 each carry the phosphoserine modification. The span at 513–523 (GSPSKQESSEN) shows a compositional bias: polar residues. Composition is skewed to basic and acidic residues over residues 557–566 (EGEKSEKDGK), 592–601 (KSEDMDSVES), and 689–699 (AAKDDLKKRQE). A Nuclear localization signal motif is present at residues 587 to 605 (RRKRSKSEDMDSVESKRRR). K592 participates in a covalent cross-link: Glycyl lysine isopeptide (Lys-Gly) (interchain with G-Cter in SUMO2). A Phosphoserine modification is found at S593. The segment at 596 to 851 (MDSVESKRRR…NQPSGNVEFI (256 aa)) is interaction with SETDB1. Residues 666–696 (NKRHKAVLTELQAKIARLTKRFGAAKDDLKK) are a coiled coil. S700 and S707 each carry phosphoserine. The segment covering 713 to 722 (NDTNSNNNMT) has biased composition (polar residues). The segment covering 871–884 (PLPNPTKPNIPSVP) has biased composition (pro residues). A Phosphoserine modification is found at S933. Residues K944 and K974 each participate in a glycyl lysine isopeptide (Lys-Gly) (interchain with G-Cter in SUMO2) cross-link. A compositionally biased stretch (polar residues) spans 948–981 (STFSPPSSAEQNSSATPRIVTENQTNKTVDSSIN). Residues 987–1000 (STSQSGKASSSDSS) are compositionally biased toward low complexity. An interaction with SUMO region spans residues 1001 to 1011 (GVIDLTMDDEE). Positions 1022-1040 (SPPSSSTVSTSQPMSRPLQ) are enriched in low complexity. Residues 1054–1143 (PTSGPSQATI…RVPQTTTYVV (90 aa)) form the Fibronectin type-III 1 domain. Over residues 1170–1187 (PRPLHPAPLPEAPQPQRL) the composition is skewed to pro residues. An interaction with MBD1 region spans residues 1190–1306 (EAASTSLPQK…TDVISSSQNS (117 aa)). A Fibronectin type-III 2 domain is found at 1196–1302 (LPQKPHLKLA…DPQSTDVISS (107 aa)).

The protein belongs to the MCAF family. Interacts with MBD1; the interaction is enhanced when MBD1 is sumoylated. Interacts with SETDB1; the interaction protects SETDB1 from proteasomal degradation and is required to stimulate histone methyltransferase activity and facilitate the conversion of dimethylated to trimethylated H3 'Lys-9'. Interacts with SUMO ubiquitin-like proteins (SUMO1, SUNO2 and SUMO3), with a preference for SUMO2 and SUMO3. Interacts with SP1, ATF7 and ZHX1. Interacts with the general transcription machinery, including ERCC2, ERCC3, GTF2E1, GTF2E2 and POLR2A. As to expression, ubiquitously expressed at all stages studied.

Its subcellular location is the nucleus. In terms of biological role, recruiter that couples transcriptional factors to general transcription apparatus and thereby modulates transcription regulation and chromatin formation. Can both act as an activator or a repressor depending on the context. Required for HUSH-mediated heterochromatin formation and gene silencing. Mediates MBD1-dependent transcriptional repression, probably by recruiting complexes containing SETDB1. Stabilizes SETDB1, is required to stimulate histone methyltransferase activity of SETDB1 and facilitates the conversion of dimethylated to trimethylated H3 'Lys-9' (H3K9me3). The complex formed with MBD1 and SETDB1 represses transcription and couples DNA methylation and histone H3 'Lys-9' trimethylation (H3K9me3). Facilitates telomerase TERT and TERC gene expression by SP1 in cancer cells. This is Activating transcription factor 7-interacting protein 1 (Atf7ip) from Mus musculus (Mouse).